The following is a 317-amino-acid chain: Olfactory receptor 1082 (317 aa).

Residues 1–26 (MESGNSTRRFSSFFLLGFTENPQLHF) are Extracellular-facing. Asn-5 carries an N-linked (GlcNAc...) asparagine glycan. Residues 27 to 51 (LIFALFLSMYLVTVLGNLLIIMAII) traverse the membrane as a helical segment. At 52–58 (TQSHLHT) the chain is on the cytoplasmic side. Residues 59-80 (PMYFFLANLSFVDICFTSTTIP) form a helical membrane-spanning segment. Topologically, residues 81–101 (KMLVNIYTQSKSITYEDCISQ) are extracellular. Cysteines 98 and 190 form a disulfide. Residues 102-121 (MCVFLVFAELGNFLLAVMAY) traverse the membrane as a helical segment. Residues 122 to 140 (DRYVAXCHPLCYTVIVNHR) lie on the Cytoplasmic side of the membrane. Residues 141 to 159 (LCILLLLLSWVISIFHAFI) form a helical membrane-spanning segment. Topologically, residues 160 to 197 (QSLIVLQLTFCGDVKIPHFFCELNQLSQLTCSDNFPSH) are extracellular. A helical transmembrane segment spans residues 198–220 (LIMNLVPVMLAAISFSGILYSYF). Over 221 to 237 (KIVSSIHSISTVQGKYK) the chain is Cytoplasmic. Residues 238-261 (AFSTCASHLSIVSLFYSTGLGVYV) form a helical membrane-spanning segment. The Extracellular segment spans residues 262–273 (SSAVVQSSHSAA). The helical transmembrane segment at 274–293 (SASVMYTVVTPMLNPFIYSL) threads the bilayer. At 294 to 317 (RNKDVKRALERLLEGNCKVHHWTG) the chain is on the cytoplasmic side.

The protein belongs to the G-protein coupled receptor 1 family. Olfactory epithelium.

It localises to the cell membrane. Functionally, odorant receptor. The protein is Olfactory receptor 1082 (Olr1082) of Rattus norvegicus (Rat).